The following is a 120-amino-acid chain: NAD(P)H-quinone oxidoreductase subunit 3, chloroplastic (120 aa).

3 helical membrane passes run 9–29 (IFWA…LISG), 64–84 (MFAL…PWAM), and 88–108 (VLGV…IVGL).

The protein belongs to the complex I subunit 3 family. NDH is composed of at least 16 different subunits, 5 of which are encoded in the nucleus.

The protein resides in the plastid. It is found in the chloroplast thylakoid membrane. The catalysed reaction is a plastoquinone + NADH + (n+1) H(+)(in) = a plastoquinol + NAD(+) + n H(+)(out). It catalyses the reaction a plastoquinone + NADPH + (n+1) H(+)(in) = a plastoquinol + NADP(+) + n H(+)(out). Its function is as follows. NDH shuttles electrons from NAD(P)H:plastoquinone, via FMN and iron-sulfur (Fe-S) centers, to quinones in the photosynthetic chain and possibly in a chloroplast respiratory chain. The immediate electron acceptor for the enzyme in this species is believed to be plastoquinone. Couples the redox reaction to proton translocation, and thus conserves the redox energy in a proton gradient. This is NAD(P)H-quinone oxidoreductase subunit 3, chloroplastic from Populus alba (White poplar).